The primary structure comprises 470 residues: Chromosomal replication initiator protein DnaA (470 aa).

Residues 1–68 (MENFWSLCLG…SALAEEVLST (68 aa)) form a domain I, interacts with DnaA modulators region. Residues 68 to 133 (TPVQIELALY…KKPKTLTETS (66 aa)) are domain II. The interval 134-350 (GLNPAFRFDN…GALNRIIAMA (217 aa)) is domain III, AAA+ region. The ATP site is built by Gly-178, Gly-180, Lys-181, and Thr-182. Residues 351–470 (NFTGHAIDVS…IAVLIQVIRD (120 aa)) form a domain IV, binds dsDNA region.

It belongs to the DnaA family. As to quaternary structure, oligomerizes as a right-handed, spiral filament on DNA at oriC.

The protein localises to the cytoplasm. Its function is as follows. Plays an essential role in the initiation and regulation of chromosomal replication. ATP-DnaA binds to the origin of replication (oriC) to initiate formation of the DNA replication initiation complex once per cell cycle. Binds the DnaA box (a 9 base pair repeat at the origin) and separates the double-stranded (ds)DNA. Forms a right-handed helical filament on oriC DNA; dsDNA binds to the exterior of the filament while single-stranded (ss)DNA is stabiized in the filament's interior. The ATP-DnaA-oriC complex binds and stabilizes one strand of the AT-rich DNA unwinding element (DUE), permitting loading of DNA polymerase. After initiation quickly degrades to an ADP-DnaA complex that is not apt for DNA replication. Binds acidic phospholipids. This chain is Chromosomal replication initiator protein DnaA, found in Methylobacillus flagellatus (strain ATCC 51484 / DSM 6875 / VKM B-1610 / KT).